We begin with the raw amino-acid sequence, 446 residues long: Oxysterols receptor LXR-beta (446 aa).

A compositionally biased stretch (low complexity) spans 1–28; the sequence is MSSPTSSLDTPLPGNGSPQPSTSSTSPT. Positions 1–69 are disordered; the sequence is MSSPTSSLDT…PERKRKKGPA (69 aa). The segment at 1-76 is transactivation AF-1; required for ligand-independent transactivation function; it reads MSSPTSSLDT…GPAPKMLGHE (76 aa). The nuclear receptor DNA-binding region spans 75–152; it reads HELCRVCGDK…AGMREQCVLS (78 aa). 2 consecutive NR C4-type zinc fingers follow at residues 78-98 and 116-140; these read CRVCGDKASGFHYNVLSCEGC and CRGSGTCQMDAFMRRKCQLCRLRKC. Residues 160-201 are disordered; the sequence is KIQKQQQQQPPPPTEPASGSSARPAASPGTSEASSQGSGEGE. Residues 175–196 show a composition bias toward low complexity; the sequence is PASGSSARPAASPGTSEASSQG. Residues 205–446 are transactivation AF-2; required for ligand-dependent transactivation function; mediates interaction with CCAR2; it reads LTAAQELMIQ…LLSEIWDVHE (242 aa). The 239-residue stretch at 208 to 446 folds into the NR LBD domain; it reads AQELMIQQLV…LLSEIWDVHE (239 aa). Residues Lys-395 and Lys-433 each participate in a glycyl lysine isopeptide (Lys-Gly) (interchain with G-Cter in SUMO2) cross-link.

The protein belongs to the nuclear hormone receptor family. NR1 subfamily. In terms of assembly, forms a heterodimer with RXR. Interacts with CCAR2 (via N-terminus) in a ligand-independent manner. Interacts (when sumoylated) with GPS2; interaction with GPS2 onto hepatic acute phase protein promoters prevents N-Cor corepressor complex dissociation. Interacts with ABCA12 and ABCA1; this interaction is required for ABCA1 localization to the cell surface and is necessary for its normal activity and stability. In terms of processing, sumoylated by SUMO2 at Lys-395 and Lys-433 during the hepatic acute phase response, leading to promote interaction with GPS2 and prevent N-Cor corepressor complex dissociation.

The protein localises to the nucleus. Functionally, nuclear receptor that exhibits a ligand-dependent transcriptional activation activity. Binds preferentially to double-stranded oligonucleotide direct repeats having the consensus half-site sequence 5'-AGGTCA-3' and 4-nt spacing (DR-4). Regulates cholesterol uptake through MYLIP-dependent ubiquitination of LDLR, VLDLR and LRP8; DLDLR and LRP8. Interplays functionally with RORA for the regulation of genes involved in liver metabolism. Induces LPCAT3-dependent phospholipid remodeling in endoplasmic reticulum (ER) membranes of hepatocytes, driving SREBF1 processing and lipogenesis. Via LPCAT3, triggers the incorporation of arachidonate into phosphatidylcholines of ER membranes, increasing membrane dynamics and enabling triacylglycerols transfer to nascent very low-density lipoprotein (VLDL) particles. Via LPCAT3 also counteracts lipid-induced ER stress response and inflammation, likely by modulating SRC kinase membrane compartmentalization and limiting the synthesis of lipid inflammatory mediators. Plays an anti-inflammatory role during the hepatic acute phase response by acting as a corepressor: inhibits the hepatic acute phase response by preventing dissociation of the N-Cor corepressor complex. This is Oxysterols receptor LXR-beta (Nr1h2) from Rattus norvegicus (Rat).